The sequence spans 420 residues: Histidine--tRNA ligase, chloroplastic (420 aa).

The protein belongs to the class-II aminoacyl-tRNA synthetase family.

It localises to the plastid. The protein localises to the chloroplast. The enzyme catalyses tRNA(His) + L-histidine + ATP = L-histidyl-tRNA(His) + AMP + diphosphate + H(+). This is Histidine--tRNA ligase, chloroplastic from Gracilaria tenuistipitata var. liui (Red alga).